The chain runs to 297 residues: Calponin-1 (297 aa).

Residues 28 to 131 (HQREQELREW…STLLALASMA (104 aa)) enclose the Calponin-homology (CH) domain. 3 Calponin-like repeats span residues 164–189 (IGLQ…RHLY), 204–229 (ISLQ…RQIF), and 243–268 (VSLQ…RQVY). The residue at position 170 (threonine 170) is a Phosphothreonine; by ROCK2. The residue at position 175 (serine 175) is a Phosphoserine; by ROCK2. Threonine 180 and threonine 184 each carry phosphothreonine; by ROCK2. Threonine 259 is modified (phosphothreonine; by ROCK2).

The protein belongs to the calponin family. In terms of assembly, part of cGMP kinase signaling complex at least composed of ACTA2/alpha-actin, CNN1/calponin H1, PLN/phospholamban, PRKG1 and ITPR1. Smooth muscle, and tissues containing significant amounts of smooth muscle.

Its function is as follows. Thin filament-associated protein that is implicated in the regulation and modulation of smooth muscle contraction. It is capable of binding to actin, calmodulin and tropomyosin. The interaction of calponin with actin inhibits the actomyosin Mg-ATPase activity. The polypeptide is Calponin-1 (CNN1) (Homo sapiens (Human)).